The sequence spans 152 residues: Dehydratase aurZ (152 aa).

Residues 34 to 129 (PSLSEKEYRH…APDHVNFADT (96 aa)) enclose the EthD domain.

This sequence belongs to the tpcK family.

The catalysed reaction is naphtopyrone YWA1 = norrubrofusarin + H2O + H(+). It participates in pigment biosynthesis. In terms of biological role, dehydratase; part of the gene cluster that mediates the biosynthesis of aurofusarin, a red mycelium pigment which is acting as a mycotoxin. The first step is performed by the polyketide synthase which condenses one acetyl-CoA and 6 malonyl-CoA units to form the first intermediate, the cyclic heptaketide and yellow pigment YWA1. The C2 hydroxyl group in the pyrone ring of YWA1 is probably formed during ring closure by an aldol-type cyclization reaction. The dehydratase aurZ then acts as the first tailoring enzyme in the aurofusarin biosynthetic pathway by converting YWA1 to nor-rubrofusarin. Nor-rubrofusarin is then methylated to rubrofusarin by the O-methyltransferase aurJ. Rubrofusarin is then transported across the plasma membrane by the rubrofusarin-specific pump aurT for further enzymatic processing by the extracellular complex composed of GIP1, aurF, aurO and aurS to yield aurofusarin. The sequence is that of Dehydratase aurZ from Gibberella zeae (strain ATCC MYA-4620 / CBS 123657 / FGSC 9075 / NRRL 31084 / PH-1) (Wheat head blight fungus).